A 228-amino-acid polypeptide reads, in one-letter code: Early nodulin-like protein 18 (228 aa).

An N-terminal signal peptide occupies residues 1 to 26 (MSPSCSSCVNVLLIMCLMLLSLSADA). Positions 28-148 (KNYTVGESTG…GQHFMINVTH (121 aa)) constitute a Phytocyanin domain. N-linked (GlcNAc...) asparagine glycosylation is found at Asn-29, Asn-71, Asn-94, and Asn-145. The cysteines at positions 86 and 136 are disulfide-linked. The interval 148–211 (HGQGLPDSSS…VHSKKSSSST (64 aa)) is disordered. Residues 153-170 (PDSSSPDDAAAPGPSESS) are compositionally biased toward low complexity. The span at 188–204 (DHPKDIESADDDKEVHS) shows a compositional bias: basic and acidic residues. Ser-204 carries GPI-anchor amidated serine lipidation. The propeptide at 205-228 (KKSSSSTTKTSLFCFVFMGLFASF) is removed in mature form.

It belongs to the early nodulin-like (ENODL) family. Mostly expressed in seedlings, roots and flowers, and, to a lower extent, in leaves, stems and seeds.

It is found in the cell membrane. Functionally, may act as a carbohydrate transporter. In Arabidopsis thaliana (Mouse-ear cress), this protein is Early nodulin-like protein 18.